The chain runs to 278 residues: Beta-lactamase-like protein str5 (278 aa).

A helical membrane pass occupies residues 20-37 (VFVLAALLSATFAFFTHT). A glycan (N-linked (GlcNAc...) asparagine) is linked at asparagine 112.

Belongs to the beta-lactamase family.

Its subcellular location is the membrane. Its pathway is mycotoxin biosynthesis. In terms of biological role, beta-lactamase-like protein; part of the gene cluster that mediates the biosynthesis of strobilurin A, an antifungal polyketide that contains a key beta-methoxyacrylate toxophore that targets the complex III of the mitochondrial electron transport chain. Strobilurin biosynthesis begins with construction of benzoyl CoA by step-wise elimination of ammonia from phenylalanine by the phenylalanine ammonia-lyase str11, oxygenation by str8 and retro-Claisen reaction to form benzoic acid, which is activated to its CoA thiolester benzoyl CoA by the dedicated CoA ligase str10. Benzoyl CoA forms the starter unit for the highly reducing polyketide synthase stpks1 that produces the polyketide prestrobilutin A. The FAD-dependent oxygenase str9 then catalyzes the key oxidative rearrangement responsible for the creation of the beta-methoxyacrylate toxophore. Str9 performs epoxidation of the 2,3 olefin of prestrobilutin A, followed by Meinwald rearrangement to furnish the aldehyde intermediate. Rapid enolization of the aldehyde intermediate would give the beta-methoxyacrylate skeleton and methylations catalyzed by str2 and str3 complete the synthesis and lead to the production of strobilurin A. The short-chain dehydrogenase stl2 and the dehydrogenase str4 play a role in the shunt pathway leading to the production of bolineol. The cluster encodes no obvious halogenase gene that could be involved in production of strobilurin B, nor any obvious dimethylallyl-transferase that could be involved in the production of strobilurin G. It is possible that unknown proteins encoded in, or near, the cluster (such as str1 or stl1) may form new classes of halogenases or dimethylally-transferases, or that the responsible genes are located elsewhere on the genome. Similarly, proteins encoded by str5/str6 hydrolases appear to have no chemical role in the biosynthesis of strobilurin A. Finally, no obvious self-resistance gene is found within the cluster. The polypeptide is Beta-lactamase-like protein str5 (Strobilurus tenacellus).